We begin with the raw amino-acid sequence, 222 residues long: Niacin transporter NiaX (222 aa).

5 consecutive transmembrane segments (helical) span residues 34–54, 72–94, 101–120, 135–155, and 167–187; these read NLII…MMPV, MAAM…LGFM, TIWL…AYVL, IFNF…VYAF, and ALLN…MIDF.

The protein belongs to the vitamin uptake transporter (VUT/ECF) (TC 2.A.88) family. In terms of assembly, in L.lactis forms a stable complex with EcfA, EcfA' and EcfT. In E.coli forms a stable energy-coupling factor (ECF) transporter complex composed of 2 membrane-embedded substrate-binding proteins (S component), 2 ATP-binding proteins (A and A' components) and 2 transmembrane proteins (T component), probably with a stoichiometry of 2:1:1:2. May be able to interact with more than 1 S component at a time.

It localises to the cell membrane. In terms of biological role, probably a niacin-binding protein that interacts with the energy-coupling factor (ECF) ABC-transporter complex. Unlike classic ABC transporters this ECF transporter provides the energy necessary to transport a number of different substrates. The substrates themselves are bound by transmembrane, not extracytoplasmic soluble proteins. Uptake of niacin into proteosomes containing EcfA1A2T and Niax has been demonstrated. Uptake requires hydrolyzable Mg-ATP and is substrate-specific; NiaX-containing proteosomes did not transport riboflavin. In Lactococcus lactis subsp. cremoris (strain MG1363), this protein is Niacin transporter NiaX (niaX).